A 61-amino-acid polypeptide reads, in one-letter code: Metallothionein (61 aa).

The residue at position 1 (Met1) is an N-acetylmethionine. Residues 1 to 29 (MDPNCSCAAGGSCTCAGSCKCKECKCTSC) are beta. Residues Cys5, Cys7, Cys13, Cys15, Cys19, Cys21, Cys24, Cys26, Cys29, Cys33, Cys34, Cys36, Cys37, Cys41, Cys44, Cys48, Cys50, Cys57, Cys59, and Cys60 each coordinate a divalent metal cation. The tract at residues 30–61 (KKSCCSCCPPGCTKCAQGCVCKGASDKCNCCA) is alpha.

This sequence belongs to the metallothionein superfamily. Type 1 family. Monomer.

In terms of biological role, metallothioneins have a high content of cysteine residues that bind various heavy metals. The sequence is that of Metallothionein from Balaena mysticetus (Bowhead whale).